The primary structure comprises 200 residues: NADH-quinone oxidoreductase subunit C (200 aa).

This sequence belongs to the complex I 30 kDa subunit family. In terms of assembly, NDH-1 is composed of 14 different subunits. Subunits NuoB, C, D, E, F, and G constitute the peripheral sector of the complex.

Its subcellular location is the cell inner membrane. It catalyses the reaction a quinone + NADH + 5 H(+)(in) = a quinol + NAD(+) + 4 H(+)(out). Functionally, NDH-1 shuttles electrons from NADH, via FMN and iron-sulfur (Fe-S) centers, to quinones in the respiratory chain. The immediate electron acceptor for the enzyme in this species is believed to be ubiquinone. Couples the redox reaction to proton translocation (for every two electrons transferred, four hydrogen ions are translocated across the cytoplasmic membrane), and thus conserves the redox energy in a proton gradient. In Burkholderia multivorans (strain ATCC 17616 / 249), this protein is NADH-quinone oxidoreductase subunit C.